The chain runs to 226 residues: Large ribosomal subunit protein uL1 (226 aa).

The protein belongs to the universal ribosomal protein uL1 family. In terms of assembly, part of the 50S ribosomal subunit.

In terms of biological role, binds directly to 23S rRNA. The L1 stalk is quite mobile in the ribosome, and is involved in E site tRNA release. Protein L1 is also a translational repressor protein, it controls the translation of the L11 operon by binding to its mRNA. The chain is Large ribosomal subunit protein uL1 from Buchnera aphidicola subsp. Cinara cedri (strain Cc).